The following is a 216-amino-acid chain: MARVQLWVAAACAVVLALAAPSLAGDPDMLQDVCVADLASPVKLNGFPCKANVTADDFFFAGLKNPGNTNNPAGSNVTAANVQSFPGVNTLGVSMARIDYAPGGQNPPHTHPRATEIIFVLEGVLEVGFITTANKLFTKTVTAGEVFVFPRGLVHFQQNRGHGPAAVIAAFNSQLQGTQAIAATLFAAAPPVPSDVLAKAFRVDVPQVDAIKAKFK.

The first 24 residues, 1-24 (MARVQLWVAAACAVVLALAAPSLA), serve as a signal peptide directing secretion. Cys-34 and Cys-49 are disulfide-bonded. 2 N-linked (GlcNAc...) asparagine glycosylation sites follow: Asn-52 and Asn-76. The 149-residue stretch at 61 to 209 (AGLKNPGNTN…AFRVDVPQVD (149 aa)) folds into the Cupin type-1 domain. Mn(2+)-binding residues include His-109, His-111, Glu-116, and His-155.

This sequence belongs to the germin family. Oligomer (believed to be a pentamer but probably hexamer).

The protein resides in the secreted. The protein localises to the extracellular space. It is found in the apoplast. In terms of biological role, may play a role in plant defense. Probably has no oxalate oxidase activity even if the active site is conserved. In Oryza sativa subsp. japonica (Rice), this protein is Germin-like protein 1-1 (GER4).